The primary structure comprises 519 residues: Demethylepipodophyllotoxin synthase (519 aa).

Residues 6–26 (CLETLLLGFFVLLPCFFYFVW) traverse the membrane as a helical segment. Cysteine 458 is a heme binding site.

This sequence belongs to the cytochrome P450 family. It depends on heme as a cofactor. As to expression, rhizome-specific expression.

It is found in the membrane. It carries out the reaction (-)-4'-desmethyl-deoxypodophyllotoxin + reduced [NADPH--hemoprotein reductase] + O2 = 4'-demethylepipodophyllotoxin + oxidized [NADPH--hemoprotein reductase] + H2O + H(+). It participates in aromatic compound metabolism; phenylpropanoid biosynthesis. Cytochrome P450 involved in the biosynthesis of etoposide, a chemotherapeutic compound of the topoisomerase inhibitor family. Catalyzes the hydroxylation of deoxypodophyllotoxin to form epipodophyllotoxin. This chain is Demethylepipodophyllotoxin synthase, found in Sinopodophyllum hexandrum (Himalayan may apple).